Consider the following 278-residue polypeptide: MPELPEVETVRRGLADRLSLFEIERVEVCRSRAIASSGGVAAFLVGLTGARVGTWSRRGKYLMAALEPNRGIWGVHLRMTGQFQWIEEPSTPCTHTRVRFWNANGHELRFVDVRSFGEMWWVPPDVELTVGIPGLARLGPEPFSEAFSAPYLKRQLKNSSRPIKTALLDQALVAGVGNIYADESLFSAGIPPLTPAGRLTLAQLERLRSSLVEVLTTSIGAGGTTFSDFRDLEGVNGNYGGQAWVYRRGGEPCRRCGTIIRRDKLSGRSTHWCPTCQG.

P2 functions as the Schiff-base intermediate with DNA in the catalytic mechanism. The Proton donor role is filled by E3. K60 (proton donor; for beta-elimination activity) is an active-site residue. DNA-binding residues include H95 and R114. The FPG-type zinc finger occupies 244 to 278; that stretch reads WVYRRGGEPCRRCGTIIRRDKLSGRSTHWCPTCQG. The Proton donor; for delta-elimination activity role is filled by R268.

The protein belongs to the FPG family. As to quaternary structure, monomer. Requires Zn(2+) as cofactor.

It carries out the reaction Hydrolysis of DNA containing ring-opened 7-methylguanine residues, releasing 2,6-diamino-4-hydroxy-5-(N-methyl)formamidopyrimidine.. It catalyses the reaction 2'-deoxyribonucleotide-(2'-deoxyribose 5'-phosphate)-2'-deoxyribonucleotide-DNA = a 3'-end 2'-deoxyribonucleotide-(2,3-dehydro-2,3-deoxyribose 5'-phosphate)-DNA + a 5'-end 5'-phospho-2'-deoxyribonucleoside-DNA + H(+). Its function is as follows. Involved in base excision repair of DNA damaged by oxidation or by mutagenic agents. Acts as a DNA glycosylase that recognizes and removes damaged bases. Has a preference for oxidized purines, such as 7,8-dihydro-8-oxoguanine (8-oxoG). Has AP (apurinic/apyrimidinic) lyase activity and introduces nicks in the DNA strand. Cleaves the DNA backbone by beta-delta elimination to generate a single-strand break at the site of the removed base with both 3'- and 5'-phosphates. The chain is Formamidopyrimidine-DNA glycosylase from Parasynechococcus marenigrum (strain WH8102).